The sequence spans 436 residues: GTPase Der (436 aa).

2 consecutive EngA-type G domains span residues 4–167 (PTVA…PVEE) and 175–351 (IRFS…ESQN). GTP is bound by residues 10–17 (GRPNVGKS), 57–61 (DTGGI), 119–122 (NKVD), 181–188 (GRPNVGKS), 229–233 (DTAGM), and 294–297 (NKWD). The region spanning 352–436 (KRIPSAVLND…PINLIARKRK (85 aa)) is the KH-like domain.

The protein belongs to the TRAFAC class TrmE-Era-EngA-EngB-Septin-like GTPase superfamily. EngA (Der) GTPase family. Associates with the 50S ribosomal subunit.

Functionally, GTPase that plays an essential role in the late steps of ribosome biogenesis. This chain is GTPase Der, found in Streptococcus agalactiae serotype Ia (strain ATCC 27591 / A909 / CDC SS700).